The chain runs to 713 residues: Denticleless protein homolog (713 aa).

WD repeat units lie at residues 47–89, 96–135, and 138–178; these read GAAV…VQRL, AHTN…LIGE, and GHQC…KDGF. The short motif at 168–171 is the DDB1-binding motif element; sequence WDTR. The short motif at 197-204 is the Nuclear localization signal element; it reads PSKVKKRK. WD repeat units follow at residues 215-254, 270-309, 314-355, and 359-399; these read DSQQ…SAYR, TRKL…TEPV, GHQN…VPPV, and GHCQ…EDSA. Positions 244–247 match the DDB1-binding motif motif; that stretch reads WDLR. 3 disordered regions span residues 474-544, 604-623, and 635-700; these read TPQR…EKRA, GFDQ…NGTV, and SDLR…TPGS. Composition is skewed to polar residues over residues 504–516 and 612–623; these read TPKS…TKTP and GPSTSFLINGTV. A compositionally biased stretch (basic and acidic residues) spans 635–644; sequence SDLRDKENSS. Residues 686-699 are compositionally biased toward polar residues; that stretch reads NAPNSPVSVPTTPG.

The protein belongs to the WD repeat cdt2 family. In terms of assembly, component of the DCX(DTL) E3 ubiquitin ligase complex, at least composed of cul4 (cul4a or cul4b), ddb1, dtl/cdt2 and rbx1.

The protein localises to the nucleus. The protein resides in the cytoplasm. It is found in the cytoskeleton. It localises to the microtubule organizing center. Its subcellular location is the centrosome. The protein localises to the chromosome. It participates in protein modification; protein ubiquitination. Its function is as follows. Substrate-specific adapter of a DCX (DDB1-CUL4-X-box) E3 ubiquitin-protein ligase complex required for cell cycle control, DNA damage response and translesion DNA synthesis. The DCX(DTL) complex, also named CRL4(CDT2) complex, mediates the polyubiquitination and subsequent degradation of CDT1, CDKN1A/p21(CIP1), KMT5A and SDE2. CDT1 degradation in response to DNA damage is necessary to ensure proper cell cycle regulation of DNA replication. CDKN1A/p21(CIP1) degradation during S phase or following UV irradiation is essential to control replication licensing. KMT5A degradation is also important for a proper regulation of mechanisms such as TGF-beta signaling, cell cycle progression, DNA repair and cell migration. Most substrates require their interaction with PCNA for their polyubiquitination: substrates interact with PCNA via their PIP-box, and those containing the 'K+4' motif in the PIP box, recruit the DCX(DTL) complex, leading to their degradation. In undamaged proliferating cells, the DCX(DTL) complex also promotes the 'Lys-164' monoubiquitination of PCNA, thereby being involved in PCNA-dependent translesion DNA synthesis. May play a role in the regulation of the circadian clock. This is Denticleless protein homolog (dtl) from Xenopus tropicalis (Western clawed frog).